The following is a 352-amino-acid chain: Small ribosomal subunit biogenesis GTPase RsgA 1 (352 aa).

Positions 1–24 are disordered; sequence MAKKKKLTQGQVRRVRDNQQKRLK. One can recognise a CP-type G domain in the interval 104–272; the sequence is TSVLTRPDYY…LIDSPGVREF (169 aa). GTP is bound by residues 160–163 and 214–222; these read NKID and GQSGVGKSS. Residues Cys-296, Cys-301, His-303, and Cys-309 each contribute to the Zn(2+) site.

The protein belongs to the TRAFAC class YlqF/YawG GTPase family. RsgA subfamily. In terms of assembly, monomer. Associates with 30S ribosomal subunit, binds 16S rRNA. Zn(2+) is required as a cofactor.

The protein localises to the cytoplasm. One of several proteins that assist in the late maturation steps of the functional core of the 30S ribosomal subunit. Helps release RbfA from mature subunits. May play a role in the assembly of ribosomal proteins into the subunit. Circularly permuted GTPase that catalyzes slow GTP hydrolysis, GTPase activity is stimulated by the 30S ribosomal subunit. In Vibrio vulnificus (strain CMCP6), this protein is Small ribosomal subunit biogenesis GTPase RsgA 1.